The sequence spans 192 residues: Phosphomevalonate kinase (192 aa).

Residues 17–23 and R141 each bind ATP; that span reads KRKSGKD. N170 lines the substrate pocket. ATP contacts are provided by H171 and Q180.

Monomer.

The protein localises to the cytoplasm. It is found in the cytosol. The enzyme catalyses (R)-5-phosphomevalonate + ATP = (R)-5-diphosphomevalonate + ADP. Its pathway is isoprenoid biosynthesis; isopentenyl diphosphate biosynthesis via mevalonate pathway; isopentenyl diphosphate from (R)-mevalonate: step 2/3. Catalyzes the reversible ATP-dependent phosphorylation of mevalonate 5-phosphate to produce mevalonate diphosphate and ADP, a key step in the mevalonic acid mediated biosynthesis of isopentenyl diphosphate and other polyisoprenoid metabolites. The chain is Phosphomevalonate kinase (PMVK) from Bos taurus (Bovine).